Here is a 406-residue protein sequence, read N- to C-terminus: Enoyl-[acyl-carrier-protein] reductase [NADH] (406 aa).

Residues glycine 48–phenylalanine 53, phenylalanine 74–glutamate 75, aspartate 111–alanine 112, and isoleucine 140–alanine 141 contribute to the NAD(+) site. Residue tyrosine 226 coordinates substrate. Tyrosine 236 (proton donor) is an active-site residue. NAD(+)-binding positions include lysine 245 and leucine 275–threonine 277.

This sequence belongs to the TER reductase family. In terms of assembly, monomer.

It catalyses the reaction a 2,3-saturated acyl-[ACP] + NAD(+) = a (2E)-enoyl-[ACP] + NADH + H(+). It functions in the pathway lipid metabolism; fatty acid biosynthesis. Involved in the final reduction of the elongation cycle of fatty acid synthesis (FAS II). Catalyzes the reduction of a carbon-carbon double bond in an enoyl moiety that is covalently linked to an acyl carrier protein (ACP). The polypeptide is Enoyl-[acyl-carrier-protein] reductase [NADH] (Coxiella burnetii (strain CbuK_Q154) (Coxiella burnetii (strain Q154))).